We begin with the raw amino-acid sequence, 477 residues long: Ribulose bisphosphate carboxylase large chain (477 aa).

A propeptide spanning residues 1 to 2 is cleaved from the precursor; sequence MS. The residue at position 3 (Pro-3) is an N-acetylproline. At Lys-14 the chain carries N6,N6,N6-trimethyllysine. 2 residues coordinate substrate: Asn-123 and Thr-173. The active-site Proton acceptor is the Lys-175. Lys-177 serves as a coordination point for substrate. 3 residues coordinate Mg(2+): Lys-201, Asp-203, and Glu-204. Lys-201 is modified (N6-carboxylysine). His-294 (proton acceptor) is an active-site residue. Substrate contacts are provided by Arg-295, His-327, and Ser-379.

This sequence belongs to the RuBisCO large chain family. Type I subfamily. In terms of assembly, heterohexadecamer of 8 large chains and 8 small chains; disulfide-linked. The disulfide link is formed within the large subunit homodimers. It depends on Mg(2+) as a cofactor. Post-translationally, the disulfide bond which can form in the large chain dimeric partners within the hexadecamer appears to be associated with oxidative stress and protein turnover.

The protein localises to the plastid. The protein resides in the chloroplast. It catalyses the reaction 2 (2R)-3-phosphoglycerate + 2 H(+) = D-ribulose 1,5-bisphosphate + CO2 + H2O. The catalysed reaction is D-ribulose 1,5-bisphosphate + O2 = 2-phosphoglycolate + (2R)-3-phosphoglycerate + 2 H(+). RuBisCO catalyzes two reactions: the carboxylation of D-ribulose 1,5-bisphosphate, the primary event in carbon dioxide fixation, as well as the oxidative fragmentation of the pentose substrate in the photorespiration process. Both reactions occur simultaneously and in competition at the same active site. The sequence is that of Ribulose bisphosphate carboxylase large chain from Cichorium intybus (Chicory).